The chain runs to 211 residues: Scoloptoxin SSD43 (211 aa).

Residues 1 to 20 (MNFVIYGVIVVLTSQLYVDG) form the signal peptide.

Contains 3 disulfide bonds. Expressed by the venom gland.

Its subcellular location is the secreted. Shows trypsin inhibiting activity. The protein is highly thermally stable, since its incubation in boiling water during 10 minutes does not reduce its activity. This Scolopendra dehaani (Thai centipede) protein is Scoloptoxin SSD43.